Reading from the N-terminus, the 503-residue chain is WAS/WASL-interacting protein family member 1 (503 aa).

Residues 1–14 (MPVPPPPAPPPPPT) are compositionally biased toward pro residues. The disordered stretch occupies residues 1-503 (MPVPPPPAPP…GAPPLPPIPR (503 aa)). The span at 21–31 (EKPTLNKTEQA) shows a compositional bias: polar residues. The WH2 domain maps to 32–49 (GRNALLSDISKGKKLKKT). Arg33 carries the post-translational modification Asymmetric dimethylarginine. The tract at residues 45–48 (KLKK) is binds actin. Positions 65 to 104 (AGAGGGGGGFGGGGGFGGGGGGGGGGSFGGGGPPGLGGLF) are enriched in gly residues. Residues 121–137 (SGGSRPPLLPPGGRSTS) show a composition bias toward low complexity. Residues Arg125 and Arg134 each carry the omega-N-methylarginine modification. 4 stretches are compositionally biased toward pro residues: residues 141–154 (FSPPSGPGRFPVPS), 161–174 (PPEPQRNRMPPPRP), 182–191 (SIPPPVPSTP), and 204–223 (PPVPGGPRQPSPGPTPPPFP). A Phosphoserine modification is found at Ser142. Ser234 carries the post-translational modification Phosphoserine. Over residues 238 to 247 (SPLSSSSPFS) the composition is skewed to low complexity. Pro residues-rich tracts occupy residues 282 to 298 (VPPPPPQNNKPPVPSTP) and 306 to 323 (APPPPPPPSRPGPPPLPP). Ser340 is subject to Phosphoserine. A Phosphothreonine modification is found at Thr345. Positions 346–371 (PPLPSPGRSGPLPPPPSERPPPPVRD) are enriched in pro residues. Ser350 is modified (phosphoserine). 3 XRSGPXPPXP motif repeats span residues 352–361 (GRSGPLPPPP), 374–383 (GRSGPLPPPP), and 410–419 (PRSGPRPPLP). Over residues 413–434 (GPRPPLPPDRPSAGAPPPPPPS) the composition is skewed to pro residues. Residues 480 to 494 (ARNESRSGSNRRERG) are compositionally biased toward basic and acidic residues.

Belongs to the verprolin family. Binds to WAS, profilin and actin. Binds to WASL. Interacts with DBNL. Interacts with FNBP1L (via the SH3 domain). In terms of tissue distribution, highly expressed in peripheral blood mononuclear cells, spleen, placenta, small intestine, colon and thymus. Lower expression in ovary, heart, brain, lung, liver, skeletal muscle, kidney, pancreas, prostate and testis.

Its subcellular location is the cytoplasmic vesicle. The protein localises to the cytoplasm. The protein resides in the cytoskeleton. It localises to the cell projection. It is found in the ruffle. Functionally, plays a role in the reorganization of the actin cytoskeleton. Contributes with NCK1 and GRB2 in the recruitment and activation of WASL. May participate in regulating the subcellular localization of WASL, resulting in the disassembly of stress fibers in favor of filopodia formation. Plays a role in the formation of cell ruffles. Plays an important role in the intracellular motility of vaccinia virus by functioning as an adapter for recruiting WASL to vaccinia virus. The sequence is that of WAS/WASL-interacting protein family member 1 (WIPF1) from Homo sapiens (Human).